Consider the following 333-residue polypeptide: Probable tRNA pseudouridine synthase B (333 aa).

Aspartate 66 acts as the Nucleophile in catalysis. In terms of domain architecture, PUA spans 233-308; sequence LKKIIVKDSA…EVVEITRVIM (76 aa).

This sequence belongs to the pseudouridine synthase TruB family. Type 2 subfamily.

The enzyme catalyses uridine(55) in tRNA = pseudouridine(55) in tRNA. Functionally, could be responsible for synthesis of pseudouridine from uracil-55 in the psi GC loop of transfer RNAs. The polypeptide is Probable tRNA pseudouridine synthase B (Methanococcus maripaludis (strain C5 / ATCC BAA-1333)).